Reading from the N-terminus, the 167-residue chain is Urease accessory protein UreE (167 aa).

It belongs to the UreE family.

Its subcellular location is the cytoplasm. Functionally, involved in urease metallocenter assembly. Binds nickel. Probably functions as a nickel donor during metallocenter assembly. This Pseudomonas aeruginosa (strain LESB58) protein is Urease accessory protein UreE.